We begin with the raw amino-acid sequence, 332 residues long: MNSTQPLGMHTSLHSWNRSAHGMPTNVSESLAKGYSDGGCYEQLFVSPEVFVTLGVISLLENILVIVAIAKNKNLHSPMYFFICSLAVADMLVSVSNGSETIVITLLNSTDTDAQSFTVDIDNVIDSVICSSLLASICSLLSIAVDRYFTIFYALQYHNIMTVKRVAITISAIWAACTVSGVLFIIYSDSSAVIICLITVFFTMLALMASLYVHMFLMARLHIKRIAVLPGSGTIRQGANMKGAITLTILIGVFVVCWAPFFLHLIFYISCPQNPYCVCFMSHFNLYLILIMCNSIIDPLIYALRSQELRKTFKEIICCSPLGGLCDLSSRY.

Residues 1–43 lie on the Extracellular side of the membrane; the sequence is MNSTQPLGMHTSLHSWNRSAHGMPTNVSESLAKGYSDGGCYEQ. N-linked (GlcNAc...) asparagine glycans are attached at residues Asn2, Asn17, and Asn26. 2 disulfide bridges follow: Cys40–Cys279 and Cys271–Cys277. Residues 44-69 form a helical membrane-spanning segment; that stretch reads LFVSPEVFVTLGVISLLENILVIVAI. The Cytoplasmic segment spans residues 70 to 81; that stretch reads AKNKNLHSPMYF. Residues 82–106 form a helical membrane-spanning segment; it reads FICSLAVADMLVSVSNGSETIVITL. Ca(2+)-binding residues include Glu100, Asp122, and Asp126. Over 107-123 the chain is Extracellular; the sequence is LNSTDTDAQSFTVDIDN. A helical membrane pass occupies residues 124–145; that stretch reads VIDSVICSSLLASICSLLSIAV. The Cytoplasmic portion of the chain corresponds to 146–165; that stretch reads DRYFTIFYALQYHNIMTVKR. Residues 166-186 traverse the membrane as a helical segment; that stretch reads VAITISAIWAACTVSGVLFII. Topologically, residues 187–191 are extracellular; it reads YSDSS. The helical transmembrane segment at 192-215 threads the bilayer; sequence AVIICLITVFFTMLALMASLYVHM. At 216-248 the chain is on the cytoplasmic side; it reads FLMARLHIKRIAVLPGSGTIRQGANMKGAITLT. A helical transmembrane segment spans residues 249–271; that stretch reads ILIGVFVVCWAPFFLHLIFYISC. The Extracellular segment spans residues 272 to 280; it reads PQNPYCVCF. The chain crosses the membrane as a helical span at residues 281–304; that stretch reads MSHFNLYLILIMCNSIIDPLIYAL. Residues 305 to 332 lie on the Cytoplasmic side of the membrane; it reads RSQELRKTFKEIICCSPLGGLCDLSSRY. Cys318 is lipidated: S-palmitoyl cysteine.

It belongs to the G-protein coupled receptor 1 family. As to quaternary structure, homodimer; disulfide-linked, also forms higher order oligomers. Interacts with GNAS. Interacts with ATRNL1. Interacts with MGRN1; this interaction competes with GNAS-binding and thus inhibits agonist-induced cAMP production. Interacts with MRAP and MRAP2; these associated factors increase ligand-sensitivity and generation of cAMP.

It localises to the cell membrane. Its function is as follows. Hormone receptor that acts as a key component of the leptin-melanocortin pathway at the intersection of homeostatic maintenance of energetic state. Plays a role in regulating food intake: activation by a stimulating hormone such as anorexigenic alpha-melanocyte stimulating hormone (alpha-MSH) inhibits appetite, whereas binding to a natural antagonist like Agouti-related protein/AGRP promotes appetite. G-protein-coupled receptor that activates conventional Galphas signaling leading to induction of anorexogenic signaling in the hypothalamus to result in negative energy balance. Regulates the firing activity of neurons from the hypothalamus by alpha-MSH and AGRP independently of Galphas signaling by ligand-induced coupling of closure of inwardly rectifying potassium channel KCNJ13. In intestinal epithelial cells, plays a role in the inhibition of hepatic glucose production via nesfatin-1/NUCB2 leading to increased cyclic adenosine monophosphate (cAMP) levels and glucagon-like peptide 1 (GLP-1) secretion in the intestinal epithelium. In Bos taurus (Bovine), this protein is Melanocortin receptor 4 (MC4R).